The chain runs to 461 residues: UDP-N-acetylmuramate--L-alanine ligase (461 aa).

ATP is bound at residue 112–118; it reads GTHGKTT.

It belongs to the MurCDEF family.

Its subcellular location is the cytoplasm. The enzyme catalyses UDP-N-acetyl-alpha-D-muramate + L-alanine + ATP = UDP-N-acetyl-alpha-D-muramoyl-L-alanine + ADP + phosphate + H(+). The protein operates within cell wall biogenesis; peptidoglycan biosynthesis. Cell wall formation. The polypeptide is UDP-N-acetylmuramate--L-alanine ligase (Geobacter sp. (strain M21)).